Reading from the N-terminus, the 484-residue chain is UDP-N-acetylmuramoyl-L-alanyl-D-glutamate--L-lysine ligase (484 aa).

Residue S43 participates in UDP-N-acetyl-alpha-D-muramoyl-L-alanyl-D-glutamate binding. An ATP-binding site is contributed by 119–125 (GTKGKTT). UDP-N-acetyl-alpha-D-muramoyl-L-alanyl-D-glutamate is bound by residues 161–162 (TT), S188, and R196. An N6-carboxylysine modification is found at K230. The L-lysine recognition motif signature appears at 405–408 (DDPN).

It belongs to the MurCDEF family. MurE subfamily. Post-translationally, carboxylation is probably crucial for Mg(2+) binding and, consequently, for the gamma-phosphate positioning of ATP.

The protein resides in the cytoplasm. It carries out the reaction UDP-N-acetyl-alpha-D-muramoyl-L-alanyl-D-glutamate + L-lysine + ATP = UDP-N-acetyl-alpha-D-muramoyl-L-alanyl-gamma-D-glutamyl-L-lysine + ADP + phosphate + H(+). It participates in cell wall biogenesis; peptidoglycan biosynthesis. In terms of biological role, catalyzes the addition of L-lysine to the nucleotide precursor UDP-N-acetylmuramoyl-L-alanyl-D-glutamate (UMAG) in the biosynthesis of bacterial cell-wall peptidoglycan. This is UDP-N-acetylmuramoyl-L-alanyl-D-glutamate--L-lysine ligase from Streptococcus agalactiae serotype Ia (strain ATCC 27591 / A909 / CDC SS700).